A 470-amino-acid polypeptide reads, in one-letter code: MSQNFGRISQVIGAVIDVEFEPGKLPPIYNALRVTNPAIDDKEYNLVLEVAQHLGENSVRTIAMDSTDGLVRGQAALDTGKQISVPVGRKTLGRILNVIGEPVDEMGPVNAEKEYGIHRESPSFVDQSTKVEAFTTGIKVVDLLAPYARGGKIGLFGGAGVGKTVLIMELINNIAKQHGGFSVFAGVGERTREGNDLWMEMKESGVLDKAALVYGQMNEPPGARARVALSALSIAEYFRDEEGQNVLLFIDNIFRFTQAGSEVSALLGRIPSAVGYQPTLATEMGELQERITSTTKGSITSVQAIYVPADDLTDPAPATAFAHLDATTVLSRQIAELGIYPAVDPLDSTSRILDPQVIGEEHYAIARQVQYVLQKYKDLQDIIAILGMDELSEEDKLVVARARKIQRFLSQPFHVAEAFTGSPGKYVELKDTIKGFQEIVAGKHDDIPEQAFYMVGTIEEALEKAKKLAA.

157-164 (GGAGVGKT) provides a ligand contact to ATP.

This sequence belongs to the ATPase alpha/beta chains family. F-type ATPases have 2 components, CF(1) - the catalytic core - and CF(0) - the membrane proton channel. CF(1) has five subunits: alpha(3), beta(3), gamma(1), delta(1), epsilon(1). CF(0) has three main subunits: a(1), b(2) and c(9-12). The alpha and beta chains form an alternating ring which encloses part of the gamma chain. CF(1) is attached to CF(0) by a central stalk formed by the gamma and epsilon chains, while a peripheral stalk is formed by the delta and b chains.

The protein localises to the cell inner membrane. It carries out the reaction ATP + H2O + 4 H(+)(in) = ADP + phosphate + 5 H(+)(out). Functionally, produces ATP from ADP in the presence of a proton gradient across the membrane. The catalytic sites are hosted primarily by the beta subunits. This is ATP synthase subunit beta from Geobacter metallireducens (strain ATCC 53774 / DSM 7210 / GS-15).